The chain runs to 141 residues: Small ribosomal subunit protein uS9c (141 aa).

Belongs to the universal ribosomal protein uS9 family.

It localises to the plastid. It is found in the chloroplast. In Tupiella akineta (Green alga), this protein is Small ribosomal subunit protein uS9c (rps9).